The sequence spans 437 residues: MLLFWWWELGDPCAWTGKGRGTLKMSPATTGTFLLTVYTLFSKVHSDRNVYPSAGVLFVHVLEREYFKGEFPPYPKPGEVSNDPITFNTNLMGYPDRPGWLRYIQRTPYSDGVLYGSPTAENVGKPTIIEITAYNRRTFETARHNLIINIMSAEEFPLPYQAEFFIKNMNVEEMLASEVLGDFLGAVKNVWQPERLNAINITSALDRGGRVPLPIKDMKEGVYVMVGADVAFSSCLREVENPQNQLRCSQEMEPVITCDKKFRTQFYIDWCKISLVDKTKQVSTYQEVVRGEGILPDGGEYKPPSDSLKSRDYYTDFLVTLAVPSAVALVLFLILAYIMCCRREGVEKRNMQTPDIQLVHHSSIQKSTKELRDMSKNREIAWPLSTLPVFHPVTGEIIPPMHTDNYDSTNMPLMQTQPNLPHQTQIPQQQTTGKWYP.

Over 1 to 317 (MLLFWWWELG…LKSRDYYTDF (317 aa)) the chain is Extracellular. Residue Asn-200 is glycosylated (N-linked (GlcNAc...) asparagine). Residues 318 to 338 (LVTLAVPSAVALVLFLILAYI) form a helical membrane-spanning segment. At 339 to 437 (MCCRREGVEK…QQQTTGKWYP (99 aa)) the chain is on the cytoplasmic side.

This sequence belongs to the sarcoglycan alpha/epsilon family. In terms of processing, N-glycosylated. Ubiquitinated, leading to its degradation by the proteasome. In terms of tissue distribution, in both neural tissues including cerebellar cortex, striatum, cerebral cortex, thalamus and hippocampus, and non-neural tissues including quadriceps muscle, liver, kidney, spleen, lung, testis and heart. Widely distributed in the brain, with a robust signal obtained from regions with dense neuronal packing such as the pyramidal cell layer of the hippocampus, cerebellar molecular layer, and cerebral cortex. Levels are highest in kidney, moderate in brain and lung, and low in skeletal muscle, liver, spleen and testis.

It localises to the cell membrane. Its subcellular location is the sarcolemma. The protein localises to the cytoplasm. It is found in the cytoskeleton. The protein resides in the cell projection. It localises to the dendrite. Its subcellular location is the golgi apparatus. In terms of biological role, component of the sarcoglycan complex, a subcomplex of the dystrophin-glycoprotein complex which forms a link between the F-actin cytoskeleton and the extracellular matrix. The chain is Epsilon-sarcoglycan from Rattus norvegicus (Rat).